We begin with the raw amino-acid sequence, 114 residues long: Large ribosomal subunit protein bL19 (114 aa).

It belongs to the bacterial ribosomal protein bL19 family.

This protein is located at the 30S-50S ribosomal subunit interface and may play a role in the structure and function of the aminoacyl-tRNA binding site. The chain is Large ribosomal subunit protein bL19 from Listeria welshimeri serovar 6b (strain ATCC 35897 / DSM 20650 / CCUG 15529 / CIP 8149 / NCTC 11857 / SLCC 5334 / V8).